The sequence spans 402 residues: CMP-sialic acid transporter 3 (402 aa).

The Cytoplasmic portion of the chain corresponds to M1 to N42. The chain crosses the membrane as a helical span at residues V43–C63. Residues K64–P73 lie on the Lumenal side of the membrane. The helical transmembrane segment at V74–I94 threads the bilayer. Residues Q95–N118 lie on the Cytoplasmic side of the membrane. The helical transmembrane segment at N119 to M139 threads the bilayer. The Lumenal segment spans residues Q140–A146. A helical membrane pass occupies residues T147–M167. The Cytoplasmic portion of the chain corresponds to R168–R170. The helical transmembrane segment at F171–L191 threads the bilayer. Topologically, residues K192–G202 are lumenal. The chain crosses the membrane as a helical span at residues L203–A223. Over S224–N243 the chain is Cytoplasmic. The helical transmembrane segment at L244–I264 threads the bilayer. The Lumenal segment spans residues Q265–T280. The helical transmembrane segment at M281 to A301 threads the bilayer. The Cytoplasmic portion of the chain corresponds to D302–S321. A helical transmembrane segment spans residues A322–I342. Residues S343–V402 are Lumenal-facing.

The protein belongs to the nucleotide-sugar transporter family. CMP-Sialate:CMP antiporter (TC 2.A.7.12) subfamily.

The protein localises to the golgi apparatus membrane. Sugar transporter involved in the transport of CMP-sialic acid from the cytoplasm into the Golgi. May transport important nucleotide sugars such as CMP-Kdo (2-keto-3-deoxy-D-manno-octulosonic acid) in physiological conditions. This chain is CMP-sialic acid transporter 3, found in Oryza sativa subsp. indica (Rice).